We begin with the raw amino-acid sequence, 247 residues long: ATP synthase subunit a, chloroplastic (247 aa).

5 helical membrane-spanning segments follow: residues 38–58, 95–115, 134–154, 199–219, and 220–240; these read QVLI…TIAV, VPFI…GALL, INTT…AGLT, LVVV…VMFL, and GLFT…AYIG.

Belongs to the ATPase A chain family. In terms of assembly, F-type ATPases have 2 components, CF(1) - the catalytic core - and CF(0) - the membrane proton channel. CF(1) has five subunits: alpha(3), beta(3), gamma(1), delta(1), epsilon(1). CF(0) has four main subunits: a, b, b' and c.

The protein resides in the plastid. It is found in the chloroplast thylakoid membrane. Its function is as follows. Key component of the proton channel; it plays a direct role in the translocation of protons across the membrane. This chain is ATP synthase subunit a, chloroplastic, found in Buxus microphylla (Littleleaf boxwood).